A 641-amino-acid chain; its full sequence is YAP1-binding protein 2 (641 aa).

It belongs to the YBP1 family.

The protein resides in the cytoplasm. In terms of biological role, involved in oxidative stress response and redox homeostasis. Required for hydrogen peroxide-induced activation of YAP1. Acts in a parallele pathway to YBP1. This is YAP1-binding protein 2 from Saccharomyces cerevisiae (strain ATCC 204508 / S288c) (Baker's yeast).